A 1480-amino-acid polypeptide reads, in one-letter code: MSNTPYNSSVPSIASMTQSSVSRSPNMHTATTPGANTSSNSPPLHMSSDSSKIKRKRNRIPLSCTICRKRKVKCDKLRPHCQQCTKTGVAHLCHYMEQTWAEEAEKELLKDNELKKLRERVKSLEKTLSKVHSSPSSNSLKSYNTPESSNLFMGNDEHTTLVNANTGSASSASHMHQQQQQQQQQEQQQDFSRSANANANSSSLSISNKYDNDELDLTKDFDLLHIKSNGTIHLGATHWLSIMKGDPYLKLLWGHIFAMREKLNEWYYQKNSYSKLKSSKCPINHAQAPPSAATRKCPVDHSAFSSGMVAPKEETPLPRKCPVDHTMFSSGMIPPREDTSSQKRCPVDHTMYSAGMMPPKDETPSPFSTKAMIDHNKHTMNPPQSKCPVDHRNYMKEYPSDMANSSSNPASRCPIDHSSMKNTAALPASTHNTIPHHQPQSGSHARSHPAQSRKHDSYMTESEVLATLCEMLPPKRVIALFIEKFFKHLYPAIPILDEQNFKNHMNQMLSLSSMNPTVNNFGMSMPSSSTLENQPITQINLPKLSDSCNLGILIIILRLTWLSIPSNSCEVDLGEESGSFLVPNESSNMSASALTSMAKEESLLLKHETPVEALELCQKYLIKFDELSNISNNNVNLTTVQFAIFYNFYMKSASNDLTTLTNTNNTGMANPGHDSESHQILLSNITQMAFSCGLHRDPDNFPQLNATIPATSQDVSNNGSKKANPSTNPTLNNNMSAATTNSSSRSGSADSRSGSNPVNKKENQVSIERFKHTWRKIWYYIVSMDVNQSLSLGSPRLLRNLRDFSDTKLPSASRIDYVRDIKELIIVKNFTLFFQIDLCIIAVLNHILNVSLARSVRKFELDSLINLLKNLTYGTENVNDVVGSLINKGLLPTSEGGSVDSNNDEIYGLPKLPDILNHGQHNQNLYADGRNTSSSDIDKKLDLPHESTTRALFFSKHMTIRMLLYLLNYILFTHYEPMGSEDPGTNILAKEYAQEALNFAMDGYRNCMIFFNNIRNTNSLFDYMNVILSYPCLDIGHRSLQFIVCLILRAKCGPLTGMRESSIITNGTSSGFNSSVEDEDVKVKQESSDELKKDDFMKDVNLDSGDSLAEILMSRMLLFQKLTKQLSKKYNYAIRMNKSTGFFVSLLDTPSKKSDSKSGGSSFMLGNWKHPKVSNMSGFLAGDKDQLQKCPVYQDALGFVSPTGANEGSAPMQGMSLQGSTARMGGTQLPPIRSYKPITYTSSNLRRMNETGEAEAKRRRFNDGYIDNNSNNDIPRGISPKPSNGLSSVQPLLSSFSMNQLNGGTIPTVPSLTNITSQMGALPSLDRITTNQINLPDPSRDEAFDNSIKQMTPMTSAFMNANTTIPSSTLNGNMNMNGAGTANTDTSANGSALSTLTSPQGSDLASNSATQYKPDLEDFLMQNSNFNGLMINPSSLVEVVGGYNDPNNLGRNDAVDFLPVDNVEIDGLVDFYRADFPIWE.

A compositionally biased stretch (polar residues) spans 1–50 (MSNTPYNSSVPSIASMTQSSVSRSPNMHTATTPGANTSSNSPPLHMSSDS). Positions 1-56 (MSNTPYNSSVPSIASMTQSSVSRSPNMHTATTPGANTSSNSPPLHMSSDSSKIKRK) are disordered. Zn(2+)-binding residues include Cys64, Cys67, Cys74, Cys81, Cys84, and Cys93. Residues 64 to 93 (CTICRKRKVKCDKLRPHCQQCTKTGVAHLC) constitute a DNA-binding region (zn(2)-C6 fungal-type). Positions 105–134 (EKELLKDNELKKLRERVKSLEKTLSKVHSS) form a coiled coil. Residues 126-208 (KTLSKVHSSP…ANSSSLSISN (83 aa)) form a disordered region. Over residues 130 to 142 (KVHSSPSSNSLKS) the composition is skewed to low complexity. Polar residues-rich tracts occupy residues 143 to 152 (YNTPESSNLF) and 160 to 176 (TLVN…SHMH). A compositionally biased stretch (low complexity) spans 177–208 (QQQQQQQQQEQQQDFSRSANANANSSSLSISN). Positions 244–441 (KGDPYLKLLW…NTIPHHQPQS (198 aa)) are heme-responsive; required for HMC formation. HRM repeat units follow at residues 280 to 285 (KCPINH), 296 to 301 (KCPVDH), 320 to 325 (KCPVDH), 344 to 349 (RCPVDH), 386 to 391 (KCPVDH), and 412 to 417 (RCPIDH). 2 stretches are compositionally biased toward polar residues: residues 429–444 (STHN…SGSH) and 703–731 (QLNA…NPTL). Disordered stretches follow at residues 429 to 456 (STHN…RKHD) and 703 to 764 (QLNA…KENQ). A compositionally biased stretch (low complexity) spans 732–756 (NNNMSAATTNSSSRSGSADSRSGSN). One copy of the HRM 7 repeat lies at 1189–1194 (KCPVYQ). Residues 1381–1408 (TANTDTSANGSALSTLTSPQGSDLASNS) are disordered. The segment covering 1385-1408 (DTSANGSALSTLTSPQGSDLASNS) has biased composition (polar residues).

In terms of assembly, binds DNA as a homodimer. Interacts with SRO9 and YDJ1. In the absence of heme, binds to at least four cellular proteins, including YDJ1 and SRO9, forming a high-molecular-weight complex (HMC) which results in repression of its activity and dictates its DNA-binding specificity.

The protein localises to the nucleus. Functionally, regulation of oxygen dependent gene expression. It modulates the expression of Iso-1 (CYP1) and Iso-2 (CYP3) cytochrome c. In response to heme, promotes transcription of genes encoding functions required for respiration, controlling oxidative damage and repression of anaerobic genes. Binds to the sequence 5'-CGGNNNTNNCGG-3'. Is non-functional in terms of iso-1 cytochrome c expression in strain S288c and its derivatives. The polypeptide is Heme-responsive zinc finger transcription factor HAP1 (HAP1) (Saccharomyces cerevisiae (strain Kyokai no. 7 / NBRC 101557) (Baker's yeast)).